We begin with the raw amino-acid sequence, 259 residues long: MTMPYYASAEQIMRDRSELARKGIARGRSVVVLTFRDGVLFVAENPSTALHKVSELYDRLGFAAVGKYNEFENLRRAGIVHADMRGYSYDRRDVTGRSLANAYAQTLGTIFTEQPKPYEVEICVAEVGRVGSPKAPQLYRITYDGSIVDEQHFVVMGGTTEPIATAMRESYRADLDLEAAVGIAVNALRQGGAGEGEKRNVDVASLEVAVLDQSRPRRAFRRIAGAALEQLVPAAPAAASESAPEPKPDTETKPADPQD.

Over residues 233–243 (PAAPAAASESA) the composition is skewed to low complexity. A disordered region spans residues 233 to 259 (PAAPAAASESAPEPKPDTETKPADPQD). The segment covering 244 to 259 (PEPKPDTETKPADPQD) has biased composition (basic and acidic residues).

It belongs to the peptidase T1A family. As to quaternary structure, the 20S proteasome core is composed of 14 alpha and 14 beta subunits that assemble into four stacked heptameric rings, resulting in a barrel-shaped structure. The two inner rings, each composed of seven catalytic beta subunits, are sandwiched by two outer rings, each composed of seven alpha subunits. The catalytic chamber with the active sites is on the inside of the barrel. Has a gated structure, the ends of the cylinder being occluded by the N-termini of the alpha-subunits. Is capped by the proteasome-associated ATPase, ARC.

It localises to the cytoplasm. It participates in protein degradation; proteasomal Pup-dependent pathway. With respect to regulation, the formation of the proteasomal ATPase ARC-20S proteasome complex, likely via the docking of the C-termini of ARC into the intersubunit pockets in the alpha-rings, may trigger opening of the gate for substrate entry. Interconversion between the open-gate and close-gate conformations leads to a dynamic regulation of the 20S proteasome proteolysis activity. Component of the proteasome core, a large protease complex with broad specificity involved in protein degradation. The protein is Proteasome subunit alpha of Rhodococcus opacus (strain B4).